Here is a 228-residue protein sequence, read N- to C-terminus: Orotate phosphoribosyltransferase (228 aa).

Residues Arg107, Lys108, Lys111, and 133-141 (EDLTTDGGS) each bind 5-phospho-alpha-D-ribose 1-diphosphate. Thr137 contacts orotate.

The protein belongs to the purine/pyrimidine phosphoribosyltransferase family. PyrE subfamily. As to quaternary structure, homodimer. It depends on Mg(2+) as a cofactor.

It catalyses the reaction orotidine 5'-phosphate + diphosphate = orotate + 5-phospho-alpha-D-ribose 1-diphosphate. The protein operates within pyrimidine metabolism; UMP biosynthesis via de novo pathway; UMP from orotate: step 1/2. In terms of biological role, catalyzes the transfer of a ribosyl phosphate group from 5-phosphoribose 1-diphosphate to orotate, leading to the formation of orotidine monophosphate (OMP). The polypeptide is Orotate phosphoribosyltransferase (Jannaschia sp. (strain CCS1)).